We begin with the raw amino-acid sequence, 559 residues long: Neutral amino acid transporter 9 (559 aa).

The Cytoplasmic portion of the chain corresponds to 1 to 118; it reads MANVDSDSRH…YTEGYRKNTS (118 aa). Residues 119–139 traverse the membrane as a helical segment; it reads LVTIFMIWNTMMGTSILSIPW. An important for arginine binding and amino acid transport region spans residues 128–133; that stretch reads TMMGTS. S133 contributes to the arginine binding site. Residues 140 to 145 are Lumenal-facing; sequence GIKQAG. Residues 146 to 166 form a helical membrane-spanning segment; the sequence is FTTGMCVIVLMGLLTLYCCYR. Residues 167–197 lie on the Cytoplasmic side of the membrane; sequence VVKSRSMIVTSDTTTWEYPDVCKHYFGSFGQ. The chain crosses the membrane as a helical span at residues 198–224; that stretch reads WSSLLFSLVSLIGAMIVYWVLMSNFLF. Residues 225–281 lie on the Lumenal side of the membrane; the sequence is NTGKFIFNFIHHINDTDTVLSTNNSSPVICPSAGSGHPDNSSMIFYNSDTEVRLFER. Residues N238, N247, and N264 are each glycosylated (N-linked (GlcNAc...) asparagine). Residues C254 and C422 are joined by a disulfide bond. Residues 282–298 form a helical membrane-spanning segment; that stretch reads WWDKSKTVPFYLIGLLL. At 299-307 the chain is on the cytoplasmic side; sequence PLLNFKSPS. The chain crosses the membrane as a helical span at residues 308–332; sequence FFSKFNILGTVSVLYLIFIVTLKAI. Over 333–354 the chain is Lumenal; the sequence is RLGFHLEFHWFAPTEFFVPEIR. The helical transmembrane segment at 355–375 threads the bilayer; it reads AQFPQLTGVLTLAFFIHNCII. Topologically, residues 376 to 392 are cytoplasmic; it reads TLLKNNKNQENNVRDLC. A helical membrane pass occupies residues 393-413; that stretch reads IAYMLVTLTYLYIGVLVFASF. At 414–435 the chain is on the lumenal side; sequence PSPPLPKDCIEQNFLDNFPSSD. The chain crosses the membrane as a helical span at residues 436–456; sequence TLSFIARICLLFQMMTVYPLL. The CARC motif signature appears at 442 to 452; that stretch reads RICLLFQMMTV. Positions 455-461 match the CRAC motif motif; that stretch reads LLGYLAR. The Cytoplasmic portion of the chain corresponds to 457 to 477; the sequence is GYLARVQLLGHIFGDIYPSIF. A helical membrane pass occupies residues 478–498; that stretch reads HVLILNLIIVGAGVTMACFYP. Residues 499–505 lie on the Lumenal side of the membrane; the sequence is NIGGIIR. A helical membrane pass occupies residues 506 to 526; it reads YSGAACGLAFVFIYPSLIYIL. At 527-538 the chain is on the cytoplasmic side; sequence SQHQEERLTWPK. A helical membrane pass occupies residues 539–559; the sequence is LVFHIIIIILGLANLIAQFFM.

This sequence belongs to the amino acid/polyamine transporter 2 family. SLC38A9 subfamily. In terms of assembly, associated component of the Ragulator complex (composed of LAMTOR1, LAMTOR2, LAMTOR3, LAMTOR4 and LAMTOR5). Associated component of the Rag GTPases heterodimers (composed of RRAGA, RRAGB, RRAGC and RRAGD); this interaction is independent of the Ragulator complex but depends on the nucleotide loading state of the Rag GTPase heterodimer. Interacts with TM4SF5. Interacts with NPC1; this interaction inhibits cholesterol-mediated mTORC1 activation via its sterol transport activity. In terms of processing, glycosylated.

The protein localises to the lysosome membrane. It localises to the late endosome membrane. It catalyses the reaction L-leucine(in) = L-leucine(out). The catalysed reaction is L-tyrosine(in) = L-tyrosine(out). It carries out the reaction L-glutamine(out) = L-glutamine(in). The enzyme catalyses L-asparagine(out) = L-asparagine(in). Its function is as follows. Lysosomal amino acid transporter involved in the activation of mTORC1 in response to amino acid levels. Probably acts as an amino acid sensor of the Rag GTPases and Ragulator complexes, 2 complexes involved in amino acid sensing and activation of mTORC1, a signaling complex promoting cell growth in response to growth factors, energy levels, and amino acids. Following activation by amino acids, the Ragulator and Rag GTPases function as a scaffold recruiting mTORC1 to lysosomes where it is in turn activated. SLC38A9 mediates transport of amino acids with low capacity and specificity with a slight preference for polar amino acids. Acts as an arginine sensor. Following activation by arginine binding, mediates transport of L-glutamine, leucine and tyrosine with high efficiency, and is required for the efficient utilization of these amino acids after lysosomal protein degradation. However, the transport mechanism is not well defined and the role of sodium is not clear. Can disassemble the lysosomal folliculin complex (LFC), and thereby triggers GAP activity of FLCN:FNIP2 toward RRAGC. Acts as an cholesterol sensor that conveys increases in lysosomal cholesterol, leading to lysosomal recruitment and activation of mTORC1 via the Rag GTPases. Guanine exchange factor (GEF) that, upon arginine binding, stimulates GDP release from RRAGA and therefore activates the Rag GTPase heterodimer and the mTORC1 pathway in response to nutrient sufficiency. The chain is Neutral amino acid transporter 9 from Rattus norvegicus (Rat).